The primary structure comprises 265 residues: Mlc titration factor A (265 aa).

Zn(2+) contacts are provided by His-111, His-148, His-152, and Glu-211.

Belongs to the MtfA family. Interacts with Mlc. The cofactor is Zn(2+).

The protein localises to the cytoplasm. In terms of biological role, involved in the modulation of the activity of the glucose-phosphotransferase system (glucose-PTS). Interacts with the transcriptional repressor Mlc, preventing its interaction with DNA and leading to the modulation of expression of genes regulated by Mlc, including ptsG, which encodes the PTS system glucose-specific EIICB component. Its function is as follows. Shows zinc-dependent metallopeptidase activity. This Salmonella schwarzengrund (strain CVM19633) protein is Mlc titration factor A.